The sequence spans 451 residues: Tetraspanin-14 (451 aa).

At 1–56 (MPHRAPRRFMKTAPGACDWEQCLLMGSGEPTRARAVVSSSHKQRKPRQEISACLKW) the chain is on the cytoplasmic side. The Basolateral membrane targeting motif lies at 20 to 24 (EQCLL). The helical transmembrane segment at 57 to 77 (LVFLLNSIVFLVGVGILALGV) threads the bilayer. Topologically, residues 78 to 96 (YLFIKDFREVKLVDIILNP) are extracellular. A helical membrane pass occupies residues 97 to 117 (AILISIFGFSICVVSFFGFMG). At 118–130 (ALRDNIFLLKCFA) the chain is on the cytoplasmic side. The chain crosses the membrane as a helical span at residues 131–151 (ACVFLSYILVVAVTLVFFTLF). Residues 152–285 (YTDTTEGLSA…QPLRTLFESH (134 aa)) are Extracellular-facing. Asparagine 205 and asparagine 211 each carry an N-linked (GlcNAc...) asparagine glycan. The chain crosses the membrane as a helical span at residues 286–306 (AVHVGAFVALLIVPVCISVCL). The Cytoplasmic portion of the chain corresponds to 307–451 (TNILAKQVDH…TDLVPQKSKS (145 aa)). Residues 328–451 (NDRRRKRDHN…TDLVPQKSKS (124 aa)) are disordered. A compositionally biased stretch (pro residues) spans 366–376 (PDIPPPLPPIE). Residues 410-434 (ATTTRTPPAAAGPAPTPQATTTNRT) are compositionally biased toward low complexity. Residues 435 to 444 (HQWVLQQTDL) are compositionally biased toward polar residues.

The protein belongs to the tetraspanin (TM4SF) family. As to expression, expressed in the germline, particularly in sperm cells. In terms of tissue distribution, expressed in the germline (particularly in sperm cells), anterior sensory cilia, hypodermis and vulva (at protein level). Expressed in the pharynx, hypodermis and vulva (at protein level).

The protein localises to the cell membrane. The protein resides in the cytoplasmic vesicle membrane. It is found in the endosome membrane. Its subcellular location is the early endosome membrane. It localises to the late endosome membrane. The protein localises to the recycling endosome membrane. The protein resides in the apical cell membrane. It is found in the basolateral cell membrane. Its function is as follows. Functions redundantly with tsp-12 to regulate cell surface levels of the BMP type II receptor daf-4 (but not BMP type I receptor sma-6), probably by regulating endosomal sorting and recycling of receptors, preventing their targeting to degradative lysosomes. Together with tsp-12, regulates cell fate specification in the postembryonic mesodermal M lineage, body size, male development and vulva development, probably by positively modulating BMP-like Sma/Mab signaling. Together with tsp-12 involved in maintaining the structural and functional integrity of the endosomal network. Together with tsp-12, probably acts by modulating the activation of glp-1, Notch-like receptor, to regulate germline maturation. In terms of biological role, functions redundantly with tsp-12 to regulate cell fate specification in the postembryonic mesodermal M lineage, body size, embryonic and vulva development. Functions redundantly with tsp-12 to regulate cell fate specification in the postembryonic mesodermal M lineage. Likely plays a complementary role in mesodermal development with tsp-14 isoform a, but may be more critical. The sequence is that of Tetraspanin-14 from Caenorhabditis elegans.